The following is a 356-amino-acid chain: sn-glycerol-3-phosphate import ATP-binding protein UgpC (356 aa).

The ABC transporter domain occupies 4–235; that stretch reads LKLQAVTKSW…PASLFVASFI (232 aa). 37 to 44 contributes to the ATP binding site; sequence GPSGCGKS.

The protein belongs to the ABC transporter superfamily. sn-glycerol-3-phosphate importer (TC 3.A.1.1.3) family. As to quaternary structure, the complex is composed of two ATP-binding proteins (UgpC), two transmembrane proteins (UgpA and UgpE) and a solute-binding protein (UgpB).

The protein localises to the cell inner membrane. It carries out the reaction sn-glycerol 3-phosphate(out) + ATP + H2O = sn-glycerol 3-phosphate(in) + ADP + phosphate + H(+). Functionally, part of the ABC transporter complex UgpBAEC involved in sn-glycerol-3-phosphate (G3P) import. Responsible for energy coupling to the transport system. This Escherichia coli O6:H1 (strain CFT073 / ATCC 700928 / UPEC) protein is sn-glycerol-3-phosphate import ATP-binding protein UgpC.